Consider the following 156-residue polypeptide: Endoribonuclease YbeY (156 aa).

Zn(2+) is bound by residues H122, H126, and H132.

This sequence belongs to the endoribonuclease YbeY family. The cofactor is Zn(2+).

The protein resides in the cytoplasm. In terms of biological role, single strand-specific metallo-endoribonuclease involved in late-stage 70S ribosome quality control and in maturation of the 3' terminus of the 16S rRNA. In Geobacillus sp. (strain WCH70), this protein is Endoribonuclease YbeY.